A 256-amino-acid chain; its full sequence is Gamma carbonic anhydrase-like 2, mitochondrial (256 aa).

A mitochondrion-targeting transit peptide spans 1–33; it reads MATSLARISKRSITSAVSSNLIRRYFAAEAVAV. Residues 103–105 and 118–119 each bind substrate; these read RGD and QE. His-124 serves as a coordination point for Zn(2+). Residues Arg-152, Gln-164, and Tyr-231 each contribute to the substrate site.

It belongs to the gamma-class carbonic anhydrase family. As to quaternary structure, component of the mitochondrial oxidoreductase respiratory chain complex I; element of the extra matrix-exposed domain, which is attached to the membrane arm of this complex. Interacts with GAMMACA2.

The protein localises to the mitochondrion membrane. Its function is as follows. Involved in complex I assembly in mitochondria and respiration. This chain is Gamma carbonic anhydrase-like 2, mitochondrial (GAMMACAL2), found in Arabidopsis thaliana (Mouse-ear cress).